Consider the following 236-residue polypeptide: Phosphoribosylaminoimidazole-succinocarboxamide synthase (236 aa).

This sequence belongs to the SAICAR synthetase family.

The enzyme catalyses 5-amino-1-(5-phospho-D-ribosyl)imidazole-4-carboxylate + L-aspartate + ATP = (2S)-2-[5-amino-1-(5-phospho-beta-D-ribosyl)imidazole-4-carboxamido]succinate + ADP + phosphate + 2 H(+). It participates in purine metabolism; IMP biosynthesis via de novo pathway; 5-amino-1-(5-phospho-D-ribosyl)imidazole-4-carboxamide from 5-amino-1-(5-phospho-D-ribosyl)imidazole-4-carboxylate: step 1/2. The protein is Phosphoribosylaminoimidazole-succinocarboxamide synthase of Rickettsia africae (strain ESF-5).